We begin with the raw amino-acid sequence, 202 residues long: MFITFEGIDGSGKTTQSHLLTEYLSKIYGVNNVVLTREPGGTLLNEAVRDLLFQAKGLDSLSELLFFIAMRREHFMKVIKPSLMQKKIVVCDRFIDSTIAYQGYGQGIDCNLICQLNDLVVDMYPDITFVIDVDVHESLSRSCKNGYEFAELEFYYRVRNGFYSIVEKNPHRCHIITDNNEICDIDGINLIHLKIVKVLQMV.

ATP is bound at residue 7–14 (GIDGSGKT).

Belongs to the thymidylate kinase family.

The catalysed reaction is dTMP + ATP = dTDP + ADP. Phosphorylation of dTMP to form dTDP in both de novo and salvage pathways of dTTP synthesis. This is Thymidylate kinase from Ehrlichia canis (strain Jake).